A 46-amino-acid chain; its full sequence is Phospholipase A2 superbin c (46 aa).

Ca(2+) is bound by residues tyrosine 28, glycine 30, and glycine 32. The cysteines at positions 29 and 45 are disulfide-linked.

It depends on Ca(2+) as a cofactor. Expressed by the venom gland.

It localises to the secreted. It carries out the reaction a 1,2-diacyl-sn-glycero-3-phosphocholine + H2O = a 1-acyl-sn-glycero-3-phosphocholine + a fatty acid + H(+). In terms of biological role, snake venom phospholipase A2 (PLA2) that inhibits collagen-induced platelet aggregation. In terms of inhibition of platelet aggregation, superbin c is more potent as superbin d. PLA2 catalyzes the calcium-dependent hydrolysis of the 2-acyl groups in 3-sn-phosphoglycerides. The polypeptide is Phospholipase A2 superbin c (Austrelaps superbus (Lowland copperhead snake)).